We begin with the raw amino-acid sequence, 429 residues long: 3-phosphoshikimate 1-carboxyvinyltransferase (429 aa).

Residues lysine 21, serine 22, and arginine 26 each contribute to the 3-phosphoshikimate site. Lysine 21 provides a ligand contact to phosphoenolpyruvate. Phosphoenolpyruvate-binding residues include glycine 94 and arginine 122. 3-phosphoshikimate is bound by residues serine 167, glutamine 169, aspartate 315, and lysine 342. Glutamine 169 lines the phosphoenolpyruvate pocket. The Proton acceptor role is filled by aspartate 315. The phosphoenolpyruvate site is built by arginine 346 and arginine 388.

Belongs to the EPSP synthase family. In terms of assembly, monomer.

The protein localises to the cytoplasm. It catalyses the reaction 3-phosphoshikimate + phosphoenolpyruvate = 5-O-(1-carboxyvinyl)-3-phosphoshikimate + phosphate. Its pathway is metabolic intermediate biosynthesis; chorismate biosynthesis; chorismate from D-erythrose 4-phosphate and phosphoenolpyruvate: step 6/7. In terms of biological role, catalyzes the transfer of the enolpyruvyl moiety of phosphoenolpyruvate (PEP) to the 5-hydroxyl of shikimate-3-phosphate (S3P) to produce enolpyruvyl shikimate-3-phosphate and inorganic phosphate. This chain is 3-phosphoshikimate 1-carboxyvinyltransferase, found in Desulforudis audaxviator (strain MP104C).